Here is a 189-residue protein sequence, read N- to C-terminus: Crossover junction endodeoxyribonuclease RuvC (189 aa).

Catalysis depends on residues D7, E68, and D141. Mg(2+)-binding residues include D7, E68, and D141.

It belongs to the RuvC family. In terms of assembly, homodimer which binds Holliday junction (HJ) DNA. The HJ becomes 2-fold symmetrical on binding to RuvC with unstacked arms; it has a different conformation from HJ DNA in complex with RuvA. In the full resolvosome a probable DNA-RuvA(4)-RuvB(12)-RuvC(2) complex forms which resolves the HJ. Requires Mg(2+) as cofactor.

It localises to the cytoplasm. The catalysed reaction is Endonucleolytic cleavage at a junction such as a reciprocal single-stranded crossover between two homologous DNA duplexes (Holliday junction).. Functionally, the RuvA-RuvB-RuvC complex processes Holliday junction (HJ) DNA during genetic recombination and DNA repair. Endonuclease that resolves HJ intermediates. Cleaves cruciform DNA by making single-stranded nicks across the HJ at symmetrical positions within the homologous arms, yielding a 5'-phosphate and a 3'-hydroxyl group; requires a central core of homology in the junction. The consensus cleavage sequence is 5'-(A/T)TT(C/G)-3'. Cleavage occurs on the 3'-side of the TT dinucleotide at the point of strand exchange. HJ branch migration catalyzed by RuvA-RuvB allows RuvC to scan DNA until it finds its consensus sequence, where it cleaves and resolves the cruciform DNA. The protein is Crossover junction endodeoxyribonuclease RuvC of Chlorobium phaeovibrioides (strain DSM 265 / 1930) (Prosthecochloris vibrioformis (strain DSM 265)).